The following is a 653-amino-acid chain: Macrolide export ATP-binding/permease protein MacB (653 aa).

Residues 6-244 form the ABC transporter domain; sequence LQLTRVTRRF…DAASGASGDA (239 aa). Residue 42 to 49 coordinates ATP; the sequence is GASGSGKS. Transmembrane regions (helical) follow at residues 278-298, 526-546, 587-607, and 616-636; these read LLTM…VAIG, LTLL…IGVM, MGGA…SLFV, and AGSI…FGFM.

The protein belongs to the ABC transporter superfamily. Macrolide exporter (TC 3.A.1.122) family. Homodimer.

Its subcellular location is the cell inner membrane. Non-canonical ABC transporter that contains transmembrane domains (TMD), which form a pore in the inner membrane, and an ATP-binding domain (NBD), which is responsible for energy generation. Confers resistance against macrolides. The polypeptide is Macrolide export ATP-binding/permease protein MacB (Burkholderia thailandensis (strain ATCC 700388 / DSM 13276 / CCUG 48851 / CIP 106301 / E264)).